The chain runs to 174 residues: uncharacterized protein (174 aa).

This is an uncharacterized protein from Archaeoglobus fulgidus (strain ATCC 49558 / DSM 4304 / JCM 9628 / NBRC 100126 / VC-16).